The sequence spans 274 residues: MAKQELMNLFLSKEFASGYKLAELVTGPFAQLLVDYSGVVQSTQRPLVILDNACGTGIISEALNRSLDSQTKGHWELTCGDISDSLVQYVNQRIQDEGWPRAKAQLVDAQDTKLPSSHFTHIFAAFECLRILQPGGTVAISNWQLPEWLVIAKSAVEAMPGDLPFPTVKEFLASLNEGWDSEEPTRVKLEQEGFDMVQVATVSQKLSLPKSTLVELIKPMLPVILGRFWTDEQRAKHEKHIPTALQQYLDDKYGASDDVPVEPRVIIATARKPC.

It belongs to the class I-like SAM-binding methyltransferase superfamily.

Its pathway is mycotoxin biosynthesis. Acetylaranotin bis-thiomethyltransferase involved in the biosynthesis of acetylaranotin derivatives, members of the epipolythiodioxopiperazine (ETP) class of toxins characterized by a disulfide-bridged cyclic dipeptide. The first step of acetylaranotin biosynthesis is performed by the NRPS ataP which produces diketopiperazine cyclo-L-Phe-L-Phe via the condensation of 2 phenylalanines (L-Phe). The ataC domain of ataTC then catalyzes the formation of bishydroxylation of cyclo-L-Phe-L-Phe. The glutathione S-transferase domain ataG in ataIMG further catalyzes the conjugation of two glutathiones to the bishydroxylated intermediate. Next, the dipeptidase ataJ removes the Glu residues. The following step is performed by the carbon sulfur lyase domain ataI of ataIMG which may convert the bis-cysteinyl adduct to yield an epidithiol intermediate. The ataT domain from ataTC then catalyzes the oxidation of the free dithiols, followed by a cyclization step catalyzed by the cytochrome P450 ataF. AtaF probably acts as an epoxidase to promote a dual epoxidation formation at C8 and C9 along with C8' and C9', followed by the spontaneous nucleophilic attack of the amide nitrogens N10 and N10' to yield an intermediate with the pyrrolidine partial structure. The final steps of acetylaranotin biosynthesis involve the acetylation and ring rearrangement of an epitetrathiodiketopiperazine intermediate to produce acetylaranotin. AtaH probably catalyzes the acetylation of epitetrathiodiketopiperazine to produce a diacetate and ataY is responsible for the formation of the dihydrooxepin moiety that converts the diacetate intermediate to acetylaranotin via acetylapoaranotin. Both enzymes could function independently in the absence of the other. The acetylaranotin bis-thiomethyltransferase ataS located outside of acetylaranotin gene cluster is the main thiomethyltransferase responsible for converting acetylaranotin and its related intermediates to their methylated forms. This chain is Acetylaranotin bis-thiomethyltransferase, found in Aspergillus terreus (strain NIH 2624 / FGSC A1156).